A 610-amino-acid polypeptide reads, in one-letter code: Phragmoplastin DRP1A (610 aa).

Position 1 is an N-acetylmethionine (M1). The Dynamin-type G domain occupies 31-300 (WDSLPAIAVV…LERVIKSRIP (270 aa)). The G1 motif stretch occupies residues 41-48 (GGQSSGKS). 44-49 (SSGKSS) serves as a coordination point for GTP. The interval 67–69 (VTR) is G2 motif. The interval 142–145 (DLPG) is G3 motif. The interval 211–214 (TKID) is G4 motif. GTP is bound by residues 212-217 (KIDLMD) and 242-245 (NRSQ). Residues 241–244 (VNRS) are G5 motif. The GED domain occupies 518–610 (LRRIGSNVLS…SEIDAVAWSK (93 aa)).

This sequence belongs to the TRAFAC class dynamin-like GTPase superfamily. Dynamin/Fzo/YdjA family. As to quaternary structure, forms homodimer and may homooligomerize and heterooligomerize to form the phragmoplastin complex. Interacts with AGD3/VAN3. May interact with CALS1. Binds to AHK2. Binds to SH3P2. Forms a complex made of SH3P2 and DRP1A and triggers its accumulation at the cell plate. Interacts with DRP2B at the plasma membrane and in forming clathrin-coated vesicles (CCV). Binds to PHIP1. Ubiquitous. Expressed in leaves (at protein level).

The protein resides in the cytoplasm. It is found in the cytoskeleton. Its subcellular location is the phragmoplast. It localises to the cell cortex. The protein localises to the cytoplasmic vesicle. The protein resides in the clathrin-coated vesicle. It is found in the cell membrane. It carries out the reaction GTP + H2O = GDP + phosphate + H(+). Functionally, microtubule-associated force-producing protein that is targeted to at the leading edges of the forming cell plate during cytokinesis. Also plays a major role in plasma membrane maintenance and cell wall integrity with implications in vesicular trafficking, polar cell expansion, vascular formation, and other aspects of plant growth and development, including stigmatic papillae expansion. Collaboratively with DRP2B, participates in clathrin-coated vesicle formation during endocytosis. Necessary for BOR1 polar localization in low-boron (B) conditions as well as for BOR1 endocytosis and subsequent degradation under high-concentration of boron. Has a GTPase activity. Required for the sterols-dependent dynamic high lipid order observed at the cell plate of dividing cells. Together with SH3P2, converts the fused vesicles to tubular structures at the cell plate and phragmoplasts during cytokinesis. With DRP2B and PIP5K3, required for the precise coordination of polar ARAC3/ROP6 and ARAC4/ROP2 placement and subsequent root hair positioning during planar polarity formation in root hair-forming cells, probably by mediating the correct basal-to-planar polarity switching of D6PK into the polar, lipid-enriched domain. Involved in endocytosis required for cellulose deposition during cell wall formation and elongation. Interacts with plasma membrane-mimetic liposomes and induces their clustering. This is Phragmoplastin DRP1A from Arabidopsis thaliana (Mouse-ear cress).